Here is a 459-residue protein sequence, read N- to C-terminus: Argininosuccinate lyase (459 aa).

This sequence belongs to the lyase 1 family. Argininosuccinate lyase subfamily.

It localises to the cytoplasm. The enzyme catalyses 2-(N(omega)-L-arginino)succinate = fumarate + L-arginine. The protein operates within amino-acid biosynthesis; L-arginine biosynthesis; L-arginine from L-ornithine and carbamoyl phosphate: step 3/3. The polypeptide is Argininosuccinate lyase (Lactococcus lactis subsp. lactis (strain IL1403) (Streptococcus lactis)).